The chain runs to 271 residues: Putative phosphoenolpyruvate synthase regulatory protein (271 aa).

ADP is bound at residue 151–158 (GVSRSGKT).

This sequence belongs to the pyruvate, phosphate/water dikinase regulatory protein family. PSRP subfamily.

The catalysed reaction is [pyruvate, water dikinase] + ADP = [pyruvate, water dikinase]-phosphate + AMP + H(+). It carries out the reaction [pyruvate, water dikinase]-phosphate + phosphate + H(+) = [pyruvate, water dikinase] + diphosphate. Functionally, bifunctional serine/threonine kinase and phosphorylase involved in the regulation of the phosphoenolpyruvate synthase (PEPS) by catalyzing its phosphorylation/dephosphorylation. This chain is Putative phosphoenolpyruvate synthase regulatory protein, found in Burkholderia thailandensis (strain ATCC 700388 / DSM 13276 / CCUG 48851 / CIP 106301 / E264).